A 76-amino-acid polypeptide reads, in one-letter code: Acyl carrier protein (76 aa).

Residues 1-76 form the Carrier domain; it reads MSIEERVKKI…SAIDYVQNNQ (76 aa). O-(pantetheine 4'-phosphoryl)serine is present on serine 36.

This sequence belongs to the acyl carrier protein (ACP) family. In terms of processing, 4'-phosphopantetheine is transferred from CoA to a specific serine of apo-ACP by AcpS. This modification is essential for activity because fatty acids are bound in thioester linkage to the sulfhydryl of the prosthetic group.

Its subcellular location is the cytoplasm. Its pathway is lipid metabolism; fatty acid biosynthesis. Carrier of the growing fatty acid chain in fatty acid biosynthesis. The polypeptide is Acyl carrier protein (Histophilus somni (strain 129Pt) (Haemophilus somnus)).